The following is a 2629-amino-acid chain: Protein DOP1 homolog (2629 aa).

7 disordered regions span residues 561–584 (NKGV…SRLN), 605–652 (SASN…TPRS), 688–710 (AGNV…PQFY), 1278–1340 (MDES…SSSA), 1371–1395 (TYRL…QTEH), 1435–1471 (ISKT…ATDS), and 1766–1785 (RQDT…SPTR). 2 stretches are compositionally biased toward polar residues: residues 605–615 (SASNQSVGRQS) and 636–647 (ASDTGQQSSSDL). A compositionally biased stretch (acidic residues) spans 1307-1320 (DITDNSDSSDFESD). The span at 1321–1333 (SELRETSLEKEDS) shows a compositional bias: basic and acidic residues. Polar residues-rich tracts occupy residues 1381–1391 (GENSLNSVATD) and 1435–1450 (ISKT…SCSQ).

This sequence belongs to the DOP1 family.

It is found in the golgi apparatus membrane. In terms of biological role, may be involved in protein traffic between late Golgi and early endosomes. This chain is Protein DOP1 homolog, found in Drosophila pseudoobscura pseudoobscura (Fruit fly).